Reading from the N-terminus, the 375-residue chain is tRNA-specific 2-thiouridylase MnmA (375 aa).

Residues 16–23 and M42 each bind ATP; that span reads GMSGGVDS. The interaction with target base in tRNA stretch occupies residues 102–104; it reads NPD. The Nucleophile role is filled by C107. The cysteines at positions 107 and 203 are disulfide-linked. G131 contributes to the ATP binding site. The interval 153–155 is interaction with tRNA; that stretch reads KDQ. C203 acts as the Cysteine persulfide intermediate in catalysis. Positions 315–316 are interaction with tRNA; it reads RY.

The protein belongs to the MnmA/TRMU family.

Its subcellular location is the cytoplasm. The catalysed reaction is S-sulfanyl-L-cysteinyl-[protein] + uridine(34) in tRNA + AH2 + ATP = 2-thiouridine(34) in tRNA + L-cysteinyl-[protein] + A + AMP + diphosphate + H(+). Catalyzes the 2-thiolation of uridine at the wobble position (U34) of tRNA, leading to the formation of s(2)U34. This chain is tRNA-specific 2-thiouridylase MnmA, found in Pseudomonas aeruginosa (strain LESB58).